Here is a 247-residue protein sequence, read N- to C-terminus: MIPQVVTSETVTVISPNGISFPQTDKPQPSHQSQDSLKKHLKAEIKVMAAIQIMCAVMVLSLGIILASVPSNLHFTSVFSILLESGYPFVGALFFAISGILSIVTEKKMTKPLVHSSLALSILSVLSALTGIAILSVSLAALEPALQQCKLAFTQLDTTQDAYHFFSPEPLNSCFVAKAALTGVFSLMLISSVLELGLAVLTATLWWKQSSSAFSGNVIFLSQNSKNKSSVSSESLCNPTYENILTS.

The Cytoplasmic portion of the chain corresponds to Met-1–Lys-46. Residues Val-47–Ala-67 traverse the membrane as a helical segment. At Ser-68–Ser-80 the chain is on the extracellular side. Residues Ile-81 to Leu-101 form a helical membrane-spanning segment. The Cytoplasmic segment spans residues Ser-102–Ser-121. The helical transmembrane segment at Ile-122–Leu-142 threads the bilayer. Over Glu-143 to Ala-180 the chain is Extracellular. A helical transmembrane segment spans residues Leu-181–Leu-201. Residues Thr-202–Ser-247 lie on the Cytoplasmic side of the membrane. Position 235 is a phosphoserine (Ser-235).

It belongs to the MS4A family. In terms of tissue distribution, expressed in thymus, spleen, intestine, colon, testis, heart, liver, brain, kidney, peripheral lymph node and bone marrow.

The protein localises to the membrane. In terms of biological role, may be involved in signal transduction as a component of a multimeric receptor complex. In Mus musculus (Mouse), this protein is Membrane-spanning 4-domains subfamily A member 6D (Ms4a6d).